Consider the following 619-residue polypeptide: Dihydroxy-acid dehydratase (619 aa).

D81 contacts Mg(2+). [2Fe-2S] cluster is bound at residue C122. The Mg(2+) site is built by D123 and K124. Position 124 is an N6-carboxylysine (K124). Residue C195 coordinates [2Fe-2S] cluster. Mg(2+) is bound at residue E491. Catalysis depends on S517, which acts as the Proton acceptor.

The protein belongs to the IlvD/Edd family. As to quaternary structure, homodimer. [2Fe-2S] cluster serves as cofactor. Requires Mg(2+) as cofactor.

It catalyses the reaction (2R)-2,3-dihydroxy-3-methylbutanoate = 3-methyl-2-oxobutanoate + H2O. It carries out the reaction (2R,3R)-2,3-dihydroxy-3-methylpentanoate = (S)-3-methyl-2-oxopentanoate + H2O. It participates in amino-acid biosynthesis; L-isoleucine biosynthesis; L-isoleucine from 2-oxobutanoate: step 3/4. The protein operates within amino-acid biosynthesis; L-valine biosynthesis; L-valine from pyruvate: step 3/4. Functions in the biosynthesis of branched-chain amino acids. Catalyzes the dehydration of (2R,3R)-2,3-dihydroxy-3-methylpentanoate (2,3-dihydroxy-3-methylvalerate) into 2-oxo-3-methylpentanoate (2-oxo-3-methylvalerate) and of (2R)-2,3-dihydroxy-3-methylbutanoate (2,3-dihydroxyisovalerate) into 2-oxo-3-methylbutanoate (2-oxoisovalerate), the penultimate precursor to L-isoleucine and L-valine, respectively. This is Dihydroxy-acid dehydratase from Rhodopseudomonas palustris (strain HaA2).